A 474-amino-acid chain; its full sequence is Glutamate--tRNA ligase (474 aa).

Residues proline 9–glycine 19 carry the 'HIGH' region motif. The short motif at lysine 240–arginine 244 is the 'KMSKS' region element. Lysine 243 contributes to the ATP binding site.

This sequence belongs to the class-I aminoacyl-tRNA synthetase family. Glutamate--tRNA ligase type 1 subfamily. As to quaternary structure, monomer.

The protein localises to the cytoplasm. The enzyme catalyses tRNA(Glu) + L-glutamate + ATP = L-glutamyl-tRNA(Glu) + AMP + diphosphate. In terms of biological role, catalyzes the attachment of glutamate to tRNA(Glu) in a two-step reaction: glutamate is first activated by ATP to form Glu-AMP and then transferred to the acceptor end of tRNA(Glu). This is Glutamate--tRNA ligase from Photobacterium profundum (strain SS9).